The sequence spans 146 residues: Hemoglobin subunit beta (146 aa).

The residue at position 1 (V1) is an N-acetylvaline. Positions 2-146 (HLTGEEKSAV…VANALAHKYH (145 aa)) constitute a Globin domain. Residue T12 is modified to Phosphothreonine. Phosphoserine is present on S44. K59 bears the N6-acetyllysine mark. H63 is a heme b binding site. K82 carries the N6-acetyllysine modification. Heme b is bound at residue H92. C93 bears the S-nitrosocysteine mark. An N6-acetyllysine modification is found at K144.

This sequence belongs to the globin family. Heterotetramer of two alpha chains and two beta chains. As to expression, red blood cells.

Its function is as follows. Involved in oxygen transport from the lung to the various peripheral tissues. In Saguinus oedipus (Cotton-top tamarin), this protein is Hemoglobin subunit beta (HBB).